Here is a 252-residue protein sequence, read N- to C-terminus: 2-succinyl-6-hydroxy-2,4-cyclohexadiene-1-carboxylate synthase (252 aa).

This sequence belongs to the AB hydrolase superfamily. MenH family. In terms of assembly, monomer.

It carries out the reaction 5-enolpyruvoyl-6-hydroxy-2-succinyl-cyclohex-3-ene-1-carboxylate = (1R,6R)-6-hydroxy-2-succinyl-cyclohexa-2,4-diene-1-carboxylate + pyruvate. It functions in the pathway quinol/quinone metabolism; 1,4-dihydroxy-2-naphthoate biosynthesis; 1,4-dihydroxy-2-naphthoate from chorismate: step 3/7. The protein operates within quinol/quinone metabolism; menaquinone biosynthesis. Catalyzes a proton abstraction reaction that results in 2,5-elimination of pyruvate from 2-succinyl-5-enolpyruvyl-6-hydroxy-3-cyclohexene-1-carboxylate (SEPHCHC) and the formation of 2-succinyl-6-hydroxy-2,4-cyclohexadiene-1-carboxylate (SHCHC). This chain is 2-succinyl-6-hydroxy-2,4-cyclohexadiene-1-carboxylate synthase, found in Escherichia coli O157:H7.